A 325-amino-acid polypeptide reads, in one-letter code: Heat-inducible transcription repressor HrcA (325 aa).

Belongs to the HrcA family.

In terms of biological role, negative regulator of class I heat shock genes (grpE-dnaK-dnaJ and groELS operons). Prevents heat-shock induction of these operons. In Staphylococcus aureus (strain USA300), this protein is Heat-inducible transcription repressor HrcA.